Reading from the N-terminus, the 213-residue chain is Putative protein Brevis radix-like 3 (213 aa).

The segment at 7–27 is disordered; the sequence is CSSKEGGEDGSRGAATPHGRD. Residues 158–213 enclose the BRX domain; the sequence is REWTAQVEPGVQITFVTLPGGGNDLKRIRFSRERFGEDRAKVWWEHNRDRIQAQYL.

Belongs to the BRX family.

The protein resides in the nucleus. This Oryza sativa subsp. japonica (Rice) protein is Putative protein Brevis radix-like 3 (BRXL3).